Reading from the N-terminus, the 279-residue chain is Large ribosomal subunit protein mL46 (279 aa).

Residue Lys230 is modified to N6-acetyllysine.

This sequence belongs to the mitochondrion-specific ribosomal protein mL46 family. As to quaternary structure, component of the mitochondrial large ribosomal subunit (mt-LSU). Mature mammalian 55S mitochondrial ribosomes consist of a small (28S) and a large (39S) subunit. The 28S small subunit contains a 12S ribosomal RNA (12S mt-rRNA) and 30 different proteins. The 39S large subunit contains a 16S rRNA (16S mt-rRNA), a copy of mitochondrial valine transfer RNA (mt-tRNA(Val)), which plays an integral structural role, and 52 different proteins. mL46 is located at the central protuberance.

The protein resides in the mitochondrion. The protein is Large ribosomal subunit protein mL46 (MRPL46) of Homo sapiens (Human).